The sequence spans 359 residues: Phospho-N-acetylmuramoyl-pentapeptide-transferase (359 aa).

Transmembrane regions (helical) follow at residues 26–46 (TIYA…WLIR), 75–95 (GGVL…NLTI), 97–117 (YVWL…ADDY), 134–154 (LACE…KPGF), 166–186 (VLPD…VGAA), 197–217 (GLAI…AYFA), 233–253 (GVGE…GFLW), 261–281 (VFMG…LAIV), 286–306 (ILLA…IFQV), and 336–356 (KVIV…ISTL).

Belongs to the glycosyltransferase 4 family. MraY subfamily. Requires Mg(2+) as cofactor.

It localises to the cell inner membrane. The catalysed reaction is UDP-N-acetyl-alpha-D-muramoyl-L-alanyl-gamma-D-glutamyl-meso-2,6-diaminopimeloyl-D-alanyl-D-alanine + di-trans,octa-cis-undecaprenyl phosphate = di-trans,octa-cis-undecaprenyl diphospho-N-acetyl-alpha-D-muramoyl-L-alanyl-D-glutamyl-meso-2,6-diaminopimeloyl-D-alanyl-D-alanine + UMP. The protein operates within cell wall biogenesis; peptidoglycan biosynthesis. In terms of biological role, catalyzes the initial step of the lipid cycle reactions in the biosynthesis of the cell wall peptidoglycan: transfers peptidoglycan precursor phospho-MurNAc-pentapeptide from UDP-MurNAc-pentapeptide onto the lipid carrier undecaprenyl phosphate, yielding undecaprenyl-pyrophosphoryl-MurNAc-pentapeptide, known as lipid I. In Syntrophus aciditrophicus (strain SB), this protein is Phospho-N-acetylmuramoyl-pentapeptide-transferase.